The sequence spans 468 residues: Aldehyde dehydrogenase family 3 member B1 (468 aa).

At M1 the chain carries N-acetylmethionine. Residue 188–193 (GNPQVG) participates in NAD(+) binding. Catalysis depends on residues E210 and C244. Residue C463 is the site of S-palmitoyl cysteine attachment. Position 465 is a cysteine methyl ester (C465). C465 carries the S-geranylgeranyl cysteine lipid modification. Positions 466–468 (TLL) are cleaved as a propeptide — removed in mature form.

This sequence belongs to the aldehyde dehydrogenase family. In terms of processing, dually lipidated in the C-terminus; prenylation occurs prior to, and is a prerequisite for palmitoylation. It is also required for activity towards long-chain substrates.

It localises to the cell membrane. The enzyme catalyses an aldehyde + NAD(+) + H2O = a carboxylate + NADH + 2 H(+). It catalyses the reaction a long-chain fatty aldehyde + NAD(+) + H2O = a long-chain fatty acid + NADH + 2 H(+). The catalysed reaction is a medium-chain fatty aldehyde + NAD(+) + H2O = a medium-chain fatty acid + NADH + 2 H(+). It carries out the reaction octanal + NAD(+) + H2O = octanoate + NADH + 2 H(+). The enzyme catalyses nonanal + NAD(+) + H2O = nonanoate + NADH + 2 H(+). It catalyses the reaction hexadecanoate + NADH + 2 H(+) = hexadecanal + NAD(+) + H2O. The catalysed reaction is (2E)-octenal + NAD(+) + H2O = (2E)-octenoate + NADH + 2 H(+). It carries out the reaction (E)-non-2-enal + NAD(+) + H2O = (E)-non-2-enoate + NADH + 2 H(+). The enzyme catalyses (E)-4-hydroxynon-2-enal + NAD(+) + H2O = (E)-4-hydroxynon-2-enoate + NADH + 2 H(+). It catalyses the reaction (2E)-hexadecenal + NAD(+) + H2O = (E)-hexadec-2-enoate + NADH + 2 H(+). The catalysed reaction is benzaldehyde + NAD(+) + H2O = benzoate + NADH + 2 H(+). It carries out the reaction an aldehyde + NADP(+) + H2O = a carboxylate + NADPH + 2 H(+). The enzyme catalyses a medium-chain fatty aldehyde + NADP(+) + H2O = a medium-chain fatty acid + NADPH + 2 H(+). It catalyses the reaction hexanal + NADP(+) + H2O = hexanoate + NADPH + 2 H(+). The catalysed reaction is octanal + NADP(+) + H2O = octanoate + NADPH + 2 H(+). It carries out the reaction nonanal + NADP(+) + H2O = nonanoate + NADPH + 2 H(+). The enzyme catalyses (2E)-octenal + NADP(+) + H2O = (2E)-octenoate + NADPH + 2 H(+). It catalyses the reaction (E)-non-2-enal + NADP(+) + H2O = (E)-non-2-enoate + NADPH + 2 H(+). The catalysed reaction is (E)-4-hydroxynon-2-enal + NADP(+) + H2O = (E)-4-hydroxynon-2-enoate + NADPH + 2 H(+). It carries out the reaction benzaldehyde + NADP(+) + H2O = benzoate + NADPH + 2 H(+). The protein operates within alcohol metabolism; ethanol degradation; acetate from ethanol: step 2/2. In terms of biological role, oxidizes medium and long chain saturated and unsaturated fatty aldehydes generated in the plasma membrane into non-toxic fatty acids. May have a protective role against the cytotoxicity induced by lipid peroxidation. Short-chain fatty aldehydes are not good substrates. Can use both NADP(+) and NAD(+) as electron acceptor in vitro, however in vivo preference will depend on their tissue levels. Low activity towards acetaldehyde and 3,4-dihydroxyphenylacetaldehyde. Able to metabolize aromatic aldehydes such as benzaldehyde to their acid form. This is Aldehyde dehydrogenase family 3 member B1 (ALDH3B1) from Bos taurus (Bovine).